Consider the following 505-residue polypeptide: Aspartyl/glutamyl-tRNA(Asn/Gln) amidotransferase subunit B (505 aa).

Belongs to the GatB/GatE family. GatB subfamily. In terms of assembly, heterotrimer of A, B and C subunits.

The enzyme catalyses L-glutamyl-tRNA(Gln) + L-glutamine + ATP + H2O = L-glutaminyl-tRNA(Gln) + L-glutamate + ADP + phosphate + H(+). The catalysed reaction is L-aspartyl-tRNA(Asn) + L-glutamine + ATP + H2O = L-asparaginyl-tRNA(Asn) + L-glutamate + ADP + phosphate + 2 H(+). Functionally, allows the formation of correctly charged Asn-tRNA(Asn) or Gln-tRNA(Gln) through the transamidation of misacylated Asp-tRNA(Asn) or Glu-tRNA(Gln) in organisms which lack either or both of asparaginyl-tRNA or glutaminyl-tRNA synthetases. The reaction takes place in the presence of glutamine and ATP through an activated phospho-Asp-tRNA(Asn) or phospho-Glu-tRNA(Gln). The sequence is that of Aspartyl/glutamyl-tRNA(Asn/Gln) amidotransferase subunit B from Streptomyces avermitilis (strain ATCC 31267 / DSM 46492 / JCM 5070 / NBRC 14893 / NCIMB 12804 / NRRL 8165 / MA-4680).